A 122-amino-acid polypeptide reads, in one-letter code: Large ribosomal subunit protein uL14 (122 aa).

Belongs to the universal ribosomal protein uL14 family. As to quaternary structure, part of the 50S ribosomal subunit. Forms a cluster with proteins L3 and L19. In the 70S ribosome, L14 and L19 interact and together make contacts with the 16S rRNA in bridges B5 and B8.

Its function is as follows. Binds to 23S rRNA. Forms part of two intersubunit bridges in the 70S ribosome. This is Large ribosomal subunit protein uL14 from Alcanivorax borkumensis (strain ATCC 700651 / DSM 11573 / NCIMB 13689 / SK2).